The following is a 689-amino-acid chain: Homoaconitase, mitochondrial (689 aa).

The transit peptide at 1–17 directs the protein to the mitochondrion; sequence MVVLRRSFHVYTRLQRG. Residues cysteine 336, cysteine 403, and cysteine 406 each contribute to the [4Fe-4S] cluster site.

Belongs to the aconitase/IPM isomerase family. It depends on [4Fe-4S] cluster as a cofactor.

The protein resides in the mitochondrion. The catalysed reaction is (2R,3S)-homoisocitrate = cis-homoaconitate + H2O. The protein operates within amino-acid biosynthesis; L-lysine biosynthesis via AAA pathway; L-alpha-aminoadipate from 2-oxoglutarate: step 3/5. In terms of biological role, catalyzes the reversible hydration of cis-homoaconitate to (2R,3S)-homoisocitrate, a step in the alpha-aminoadipate pathway for lysine biosynthesis. The polypeptide is Homoaconitase, mitochondrial (LYS4) (Candida glabrata (strain ATCC 2001 / BCRC 20586 / JCM 3761 / NBRC 0622 / NRRL Y-65 / CBS 138) (Yeast)).